The sequence spans 290 residues: Fructose-1,6-bisphosphatase class 1 (290 aa).

Positions 78, 96, 98, and 99 each coordinate Mg(2+). Substrate is bound by residues 99–102 (DGSS), Y201, and K226. E232 contacts Mg(2+).

It belongs to the FBPase class 1 family. Homotetramer. The cofactor is Mg(2+).

Its subcellular location is the cytoplasm. It catalyses the reaction beta-D-fructose 1,6-bisphosphate + H2O = beta-D-fructose 6-phosphate + phosphate. It functions in the pathway carbohydrate biosynthesis; gluconeogenesis. This Helicobacter pylori (strain J99 / ATCC 700824) (Campylobacter pylori J99) protein is Fructose-1,6-bisphosphatase class 1.